The primary structure comprises 222 residues: Cytochrome b6-f complex iron-sulfur subunit, chloroplastic (222 aa).

Residues 1–49 (MASTALSTASNPTQLCRTRASSLCKPVKGLGFGRERIPRNITCMAGSIS) constitute a chloroplast transit peptide. A helical transmembrane segment spans residues 66–86 (LLGAISLPTFGMLVPYGSFLV). Residues 109-205 (VEDWLKTHGP…ADVDDGKVVF (97 aa)) form the Rieske domain. The [2Fe-2S] cluster site is built by Cys151, His153, Cys169, and His172. An intrachain disulfide couples Cys156 to Cys171.

Belongs to the Rieske iron-sulfur protein family. In terms of assembly, the 4 large subunits of the cytochrome b6-f complex are cytochrome b6, subunit IV (17 kDa polypeptide, petD), cytochrome f and the Rieske protein, while the 4 small subunits are petG, petL, petM and petN. The complex functions as a dimer. It depends on [2Fe-2S] cluster as a cofactor.

Its subcellular location is the plastid. The protein localises to the chloroplast thylakoid membrane. It catalyses the reaction 2 oxidized [plastocyanin] + a plastoquinol + 2 H(+)(in) = 2 reduced [plastocyanin] + a plastoquinone + 4 H(+)(out). Its function is as follows. Component of the cytochrome b6-f complex, which mediates electron transfer between photosystem II (PSII) and photosystem I (PSI), cyclic electron flow around PSI, and state transitions. This chain is Cytochrome b6-f complex iron-sulfur subunit, chloroplastic (petC), found in Triticum aestivum (Wheat).